A 115-amino-acid polypeptide reads, in one-letter code: C-type natriuretic peptide prohormone (115 aa).

The segment at 24-49 (PSDELNNEAEEMSPAASLPELNADQS) is disordered. Cys-99 and Cys-115 are disulfide-bonded.

This sequence belongs to the natriuretic peptide family. As to expression, CNP-115 is differentially processed to produce CNP-38 and CNP-39 in the heart and CNP-22 in the brain.

The protein localises to the secreted. Its function is as follows. Hormone which may be vasoactive and natriuretic. Has a cGMP-stimulating activity. This Scyliorhinus canicula (Small-spotted catshark) protein is C-type natriuretic peptide prohormone.